The chain runs to 420 residues: Mitogen-activated protein kinase HOG2 (420 aa).

Residues 29–37 (VGMGAFGLV) and K52 contribute to the ATP site. D144 functions as the Proton acceptor in the catalytic mechanism. T174 carries the phosphothreonine modification. The short motif at 174-176 (TGY) is the TXY element. Y176 bears the Phosphotyrosine mark. Positions 372 to 394 (AQHHHQTQQQSSGKHTNPTTSSS) are disordered.

Belongs to the protein kinase superfamily. Ser/Thr protein kinase family. MAP kinase subfamily. HOG1 sub-subfamily. Mg(2+) is required as a cofactor. Dually phosphorylated on Thr-174 and Tyr-176, which activates the enzyme.

The protein localises to the cytoplasm. It is found in the nucleus. It catalyses the reaction L-seryl-[protein] + ATP = O-phospho-L-seryl-[protein] + ADP + H(+). The enzyme catalyses L-threonyl-[protein] + ATP = O-phospho-L-threonyl-[protein] + ADP + H(+). With respect to regulation, activated by tyrosine and threonine phosphorylation. Mitogen-activated protein kinase involved in a signal transduction pathway that is activated by changes in the osmolarity of the extracellular environment. Controls osmotic regulation of transcription of target genes. This is Mitogen-activated protein kinase HOG2 (HOG2) from Zygosaccharomyces rouxii.